The chain runs to 127 residues: Fumarate reductase subunit C (127 aa).

A run of 3 helical transmembrane segments spans residues 30–50 (ATVL…GSLV), 67–87 (VVIA…HTFF), and 107–127 (IIVL…LIVV).

The protein belongs to the FrdC family. Part of an enzyme complex containing four subunits: a flavoprotein (FrdA), an iron-sulfur protein (FrdB), and two hydrophobic anchor proteins (FrdC and FrdD).

The protein resides in the cell inner membrane. Functionally, anchors the catalytic components of the fumarate reductase complex to the cell membrane, binds quinones. The sequence is that of Fumarate reductase subunit C from Vibrio vulnificus (strain CMCP6).